The following is a 49-amino-acid chain: DNA-directed RNA polymerase subunit Rpo12 (49 aa).

Zn(2+) contacts are provided by Cys11, Cys27, and Cys30.

Belongs to the archaeal Rpo12/eukaryotic RPC10 RNA polymerase subunit family. In terms of assembly, part of the RNA polymerase complex. Requires Zn(2+) as cofactor.

The protein localises to the cytoplasm. The catalysed reaction is RNA(n) + a ribonucleoside 5'-triphosphate = RNA(n+1) + diphosphate. DNA-dependent RNA polymerase (RNAP) catalyzes the transcription of DNA into RNA using the four ribonucleoside triphosphates as substrates. This Pyrococcus furiosus (strain ATCC 43587 / DSM 3638 / JCM 8422 / Vc1) protein is DNA-directed RNA polymerase subunit Rpo12.